Consider the following 266-residue polypeptide: ATP synthase subunit a (266 aa).

The next 5 membrane-spanning stretches (helical) occupy residues 28–48 (SINV…LVIF), 88–108 (LIAP…LMDL), 141–161 (DVNI…FYSI), 206–226 (LFGN…LLPW), and 237–257 (AIFH…LTVV).

The protein belongs to the ATPase A chain family. As to quaternary structure, F-type ATPases have 2 components, CF(1) - the catalytic core - and CF(0) - the membrane proton channel. CF(1) has five subunits: alpha(3), beta(3), gamma(1), delta(1), epsilon(1). CF(0) has three main subunits: a(1), b(2) and c(9-12). The alpha and beta chains form an alternating ring which encloses part of the gamma chain. CF(1) is attached to CF(0) by a central stalk formed by the gamma and epsilon chains, while a peripheral stalk is formed by the delta and b chains.

Its subcellular location is the cell inner membrane. Its function is as follows. Key component of the proton channel; it plays a direct role in the translocation of protons across the membrane. The sequence is that of ATP synthase subunit a from Pectobacterium carotovorum subsp. carotovorum (strain PC1).